Here is a 222-residue protein sequence, read N- to C-terminus: MIF4G domain-containing protein B (222 aa).

An MIF4G domain is found at 3-205; sequence NSSKEDYKIQ…LEILEFRAGG (203 aa).

Belongs to the MIF4GD family. Interacts with eif4g1, eif4g2 and slbp; probably tethered by SLBP to the 3'-end of mRNAs ending with the histone stem-loop, it also interacts with eif4g1 which is bound to their 5'-end.

The protein resides in the cytoplasm. It is found in the nucleus. In terms of biological role, functions in replication-dependent translation of histone mRNAs which differ from other eukaryotic mRNAs in that they do not end with a poly-A tail but a stem-loop. May participate in circularizing those mRNAs specifically enhancing their translation. This chain is MIF4G domain-containing protein B (mif4gdb), found in Danio rerio (Zebrafish).